The chain runs to 547 residues: Sodium/hydrogen exchanger 9B2 (547 aa).

The disordered stretch occupies residues 1 to 68 (MEDEDKTAEC…PQDSPTEPNG (68 aa)). The Cytoplasmic portion of the chain corresponds to 1–86 (MEDEDKTAEC…ACPPRGCLAR (86 aa)). Basic and acidic residues predominate over residues 23-45 (APPHHELQEERVMSLRGTDRSEP). S49 bears the Phosphoserine mark. Residues 87–104 (VITNGTMVVLLWAMVWSV) form a helical membrane-spanning segment. At 105 to 113 (TGPECLPGG) the chain is on the extracellular side. The chain crosses the membrane as a helical span at residues 114–133 (NLFGIIILFYCSITGGKLFG). Topologically, residues 134 to 144 (LIKFPTLPPLP) are cytoplasmic. A helical transmembrane segment spans residues 145–161 (PLLGMLLAGFLLRNIPV). The Extracellular segment spans residues 162–171 (INDSVRIQHK). The helical transmembrane segment at 172–189 (WSSSLRSIALSVILVRAG) threads the bilayer. The Cytoplasmic portion of the chain corresponds to 190–200 (LGLDSKALRKL). A helical membrane pass occupies residues 201–227 (KGVCVRLAMGPCIVEACASAILSHFLM). The Extracellular portion of the chain corresponds to 228-233 (GLPWQW). A helical transmembrane segment spans residues 234 to 242 (GFILGFVVG). Residues 243 to 270 (AVSPAVVVPSMLLLQEGGYGVGKGIPTL) are Cytoplasmic-facing. 4 residues coordinate Na(+): V244, G275, D278, and D279. Residues 271–290 (LMAAGSFDDILAITGFNTCL) traverse the membrane as a helical segment. The Extracellular segment spans residues 291 to 300 (GVAFSTGSTV). Residues 301–324 (FNIFRGILEVVIGVAAGSFLGFFI) traverse the membrane as a helical segment. Topologically, residues 325 to 339 (QYFPSRDQDNLVWKR) are cytoplasmic. A helical transmembrane segment spans residues 340–357 (AFLVLGFAVLAVFSSVYF). Topologically, residues 358 to 361 (SFPG) are extracellular. The helical transmembrane segment at 362-373 (SGGLCTLVMAFL) threads the bilayer. Over 374–390 (AGMRWTDKKSEVEKVIA) the chain is Cytoplasmic. A helical transmembrane segment spans residues 391-411 (VTWDVFQPLLFGLIGAEVSIV). Residues 412-417 (SLRAET) lie on the Extracellular side of the membrane. The chain crosses the membrane as a helical span at residues 418–440 (VGLCVATLSIAVLIRILTTFLMV). Over 441–461 (CFAGFNIKEKIFISFAWLPKA) the chain is Cytoplasmic. A helical membrane pass occupies residues 462-473 (TVQAAIGSVALD). Topologically, residues 474–486 (TARSHGEKQLEDY) are extracellular. The chain crosses the membrane as a helical span at residues 487 to 509 (GMDVLTVAFLAILITAPIGSLLI). Residues 510-547 (GLLGPRVLQKSEHRTEEEVQGETSAHIQRKPEDSITEA) lie on the Cytoplasmic side of the membrane. Residues 522–547 (HRTEEEVQGETSAHIQRKPEDSITEA) are disordered. The segment covering 538–547 (RKPEDSITEA) has biased composition (basic and acidic residues).

The protein belongs to the monovalent cation:proton antiporter 1 (CPA1) transporter (TC 2.A.36) family. In terms of assembly, homodimer; dimerization is essential for SLC9B2 activity. Lipids seem to play a role in the stabilization of the dimerization subdomain. As to expression, widely expressed. However expression seems to be restricted to specific cell types within individual organs, e.g. osteoclasts in the bone, distal tubules of the kidney or beta-cells of Langerhans islets. In sperm specifically present in the principal piece of sperm tail (at protein level).

It is found in the cell membrane. The protein resides in the mitochondrion membrane. The protein localises to the endosome membrane. It localises to the lysosome membrane. Its subcellular location is the recycling endosome membrane. It is found in the cytoplasmic vesicle. The protein resides in the secretory vesicle. The protein localises to the synaptic vesicle membrane. It localises to the cell projection. Its subcellular location is the cilium. It is found in the flagellum membrane. The protein resides in the basolateral cell membrane. The protein localises to the apical cell membrane. The enzyme catalyses Na(+)(in) + H(+)(out) = Na(+)(out) + H(+)(in). It catalyses the reaction Li(+)(out) + H(+)(in) = Li(+)(in) + H(+)(out). It carries out the reaction Li(+)(in) + Na(+)(out) = Li(+)(out) + Na(+)(in). Its activity is regulated as follows. Allosterically inhibited by the N-terminal domain. Inhibited by phloretin. Electroneutral Na(+) Li(+)/H(+) antiporter that extrudes Na(+) or Li(+) in exchange for external protons across the membrane. Uses the proton gradient/membrane potential to extrude sodium. Contributes to the regulation of intracellular pH and sodium homeostasis. Also able to mediate Na(+)/Li(+) antiporter activity in kidney. May play a physiological role in renal tubular function and blood pressure homeostasis. Plays an important role for insulin secretion and clathrin-mediated endocytosis in beta-cells. Involved in sperm motility and fertility. It is controversial whether SLC9B2 plays a role in osteoclast differentiation or not. The chain is Sodium/hydrogen exchanger 9B2 from Mus musculus (Mouse).